We begin with the raw amino-acid sequence, 63 residues long: Small ribosomal subunit protein bS21 (63 aa).

The protein belongs to the bacterial ribosomal protein bS21 family.

The chain is Small ribosomal subunit protein bS21 from Porphyromonas gingivalis (strain ATCC BAA-308 / W83).